Reading from the N-terminus, the 398-residue chain is DnaJ-like protein R260 (398 aa).

The J domain maps to 7 to 72; sequence DLYEILGLTP…EKRRVYDQYG (66 aa). The CR-type zinc-finger motif lies at 118–202; that stretch reads KKTVKVTITV…CKGAGINKSE (85 aa). CXXCXGXG motif repeat units follow at residues 131–138, 147–154, 173–180, and 190–197; these read CDDCDATG, CKVCRGKG, CHGCQGKK, and CPSCKGAG. Residues 364 to 398 are disordered; it reads LRQINTDPSDESQDRDSEESYGGHGRPEGVGCAQQ. The span at 371-382 shows a compositional bias: acidic residues; that stretch reads PSDESQDRDSEE.

The cofactor is Zn(2+).

This is DnaJ-like protein R260 from Acanthamoeba polyphaga mimivirus (APMV).